The primary structure comprises 156 residues: MEAYLFLIGLVLIGVIAQNKSLIIAAAFLLIIKAIGLDGRLFPSLQAKGITWGVTLITAAILVPIATGDIGFRELLNSVRGHIGIISFLAGIFVAIIAAHGVGLMKEDPLVTTALLAGTILAVGLFRGVPVGPLIGAGIAALVIGMWDIIVKAISG.

5 consecutive transmembrane segments (helical) span residues 5–25 (LFLI…LIIA), 52–72 (WGVT…DIGF), 83–103 (IGII…HGVG), 109–129 (PLVT…FRGV), and 131–151 (VGPL…DIIV).

It belongs to the UPF0756 family.

The protein localises to the cell membrane. The polypeptide is UPF0756 membrane protein Exig_2210 (Exiguobacterium sibiricum (strain DSM 17290 / CCUG 55495 / CIP 109462 / JCM 13490 / 255-15)).